The chain runs to 215 residues: Cytochrome b6 (215 aa).

The helical transmembrane segment at 32-52 threads the bilayer; it reads IFYCLGGITLTCFLVQVATGF. Cys-35 is a heme c binding site. Heme b is bound by residues His-86 and His-100. The next 3 helical transmembrane spans lie at 90 to 110, 116 to 136, and 186 to 206; these read ASMM…TGGF, LTWV…VTGY, and LHTF…FLMI. Residues His-187 and His-202 each contribute to the heme b site.

It belongs to the cytochrome b family. PetB subfamily. In terms of assembly, the 4 large subunits of the cytochrome b6-f complex are cytochrome b6, subunit IV (17 kDa polypeptide, PetD), cytochrome f and the Rieske protein, while the 4 small subunits are PetG, PetL, PetM and PetN. The complex functions as a dimer. Heme b is required as a cofactor. It depends on heme c as a cofactor.

It localises to the plastid. The protein resides in the chloroplast thylakoid membrane. In terms of biological role, component of the cytochrome b6-f complex, which mediates electron transfer between photosystem II (PSII) and photosystem I (PSI), cyclic electron flow around PSI, and state transitions. This Morus indica (Mulberry) protein is Cytochrome b6.